Reading from the N-terminus, the 530-residue chain is Bifunctional purine biosynthesis protein PurH (530 aa).

The 148-residue stretch at 1–148 folds into the MGS-like domain; that stretch reads MNNARPIRRA…KNHKDVTIVV (148 aa).

Belongs to the PurH family.

It carries out the reaction (6R)-10-formyltetrahydrofolate + 5-amino-1-(5-phospho-beta-D-ribosyl)imidazole-4-carboxamide = 5-formamido-1-(5-phospho-D-ribosyl)imidazole-4-carboxamide + (6S)-5,6,7,8-tetrahydrofolate. The catalysed reaction is IMP + H2O = 5-formamido-1-(5-phospho-D-ribosyl)imidazole-4-carboxamide. The protein operates within purine metabolism; IMP biosynthesis via de novo pathway; 5-formamido-1-(5-phospho-D-ribosyl)imidazole-4-carboxamide from 5-amino-1-(5-phospho-D-ribosyl)imidazole-4-carboxamide (10-formyl THF route): step 1/1. It participates in purine metabolism; IMP biosynthesis via de novo pathway; IMP from 5-formamido-1-(5-phospho-D-ribosyl)imidazole-4-carboxamide: step 1/1. The polypeptide is Bifunctional purine biosynthesis protein PurH (Aliivibrio fischeri (strain MJ11) (Vibrio fischeri)).